A 553-amino-acid chain; its full sequence is RNA N(6)-adenosine-methyltransferase METTL16 (553 aa).

The segment at 17 to 20 (PPDF) is RNA-binding. Residues arginine 82, glycine 110, serine 114, glutamate 133, threonine 164, and asparagine 184 each coordinate S-adenosyl-L-methionine. Residues 163 to 167 (KTLLM) form a K-loop region. RNA-binding regions lie at residues 199 to 211 (SRNS…SSVN), 250 to 254 (GKKCS), and 277 to 283 (QGRTMRW). Residues 289 to 400 (FYDDVTVPSP…QLREVPRAPE (112 aa)) form a VCR 1 region. Residues serine 329, serine 425, and serine 429 each carry the phosphoserine modification. The interval 457–496 (EETPEATEDERDEERGGMEAMESCKGSSNGAQDGEASEKG) is disordered. Over residues 458–468 (ETPEATEDERD) the composition is skewed to acidic residues. Threonine 463 is modified (phosphothreonine). The segment at 506-553 (YLFKCLVNIKKEAGDAVVEMHWVEGQNRDLMNQLCTYVRNQILRLVAS) is VCR 2.

The protein belongs to the methyltransferase superfamily. METTL16/RlmF family. As to quaternary structure, interacts with MEPCE. Interacts with LARP7.

It is found in the nucleus. The protein resides in the cytoplasm. It carries out the reaction adenosine in U6 snRNA + S-adenosyl-L-methionine = N(6)-methyladenosine in U6 snRNA + S-adenosyl-L-homocysteine + H(+). The catalysed reaction is an adenosine in mRNA + S-adenosyl-L-methionine = an N(6)-methyladenosine in mRNA + S-adenosyl-L-homocysteine + H(+). Methyltransferase activity is autoinhibited by the K-loop region that blocks S-adenosyl-L-methionine-binding. Upon activation, K-loop changes conformation, allowing S-adenosyl-L-methionine-binding and subsequent methyltransferase activity. mRNA N6-adenosine-methyltransferase activity is inhibited by zinc. In terms of biological role, RNA N6-methyltransferase that methylates adenosine residues at the N(6) position of a subset of RNAs and is involved in S-adenosyl-L-methionine homeostasis by regulating expression of MAT2A transcripts. Able to N6-methylate a subset of mRNAs and U6 small nuclear RNAs (U6 snRNAs). In contrast to the METTL3-METTL14 heterodimer, only able to methylate a limited number of RNAs: requires both a 5'UACAGAGAA-3' nonamer sequence and a specific RNA structure. Plays a key role in S-adenosyl-L-methionine homeostasis by mediating N6-methylation of MAT2A mRNAs, altering splicing of MAT2A transcripts: in presence of S-adenosyl-L-methionine, binds the 3'-UTR region of MAT2A mRNA and specifically N6-methylates the first hairpin of MAT2A mRNA, preventing recognition of their 3'-splice site by U2AF1/U2AF35, thereby inhibiting splicing and protein production of S-adenosylmethionine synthase. In S-adenosyl-L-methionine-limiting conditions, binds the 3'-UTR region of MAT2A mRNA but stalls due to the lack of a methyl donor, preventing N6-methylation and promoting expression of MAT2A. In addition to mRNAs, also able to mediate N6-methylation of U6 small nuclear RNA (U6 snRNA): specifically N6-methylates adenine in position 43 of U6 snRNAs. Also able to bind various lncRNAs, such as 7SK snRNA (7SK RNA) or 7SL RNA. Specifically binds the 3'-end of the MALAT1 long non-coding RNA. This is RNA N(6)-adenosine-methyltransferase METTL16 from Mus musculus (Mouse).